The chain runs to 201 residues: Ribonuclease HII (201 aa).

The 191-residue stretch at 10 to 200 folds into the RNase H type-2 domain; the sequence is LIEAGCDEAG…LGTDPQLEIP (191 aa). Aspartate 16, glutamate 17, and aspartate 108 together coordinate a divalent metal cation.

It belongs to the RNase HII family. Mn(2+) is required as a cofactor. Requires Mg(2+) as cofactor.

It localises to the cytoplasm. The catalysed reaction is Endonucleolytic cleavage to 5'-phosphomonoester.. Endonuclease that specifically degrades the RNA of RNA-DNA hybrids. The polypeptide is Ribonuclease HII (Phocaeicola vulgatus (strain ATCC 8482 / DSM 1447 / JCM 5826 / CCUG 4940 / NBRC 14291 / NCTC 11154) (Bacteroides vulgatus)).